The sequence spans 157 residues: Protein Smg (157 aa).

Belongs to the Smg family.

The protein is Protein Smg of Escherichia coli O6:H1 (strain CFT073 / ATCC 700928 / UPEC).